We begin with the raw amino-acid sequence, 448 residues long: Glucose-6-phosphate isomerase (448 aa).

The active-site Proton donor is the Glu290. Residues His311 and Lys425 contribute to the active site.

This sequence belongs to the GPI family.

It is found in the cytoplasm. It catalyses the reaction alpha-D-glucose 6-phosphate = beta-D-fructose 6-phosphate. The protein operates within carbohydrate biosynthesis; gluconeogenesis. Its pathway is carbohydrate degradation; glycolysis; D-glyceraldehyde 3-phosphate and glycerone phosphate from D-glucose: step 2/4. Functionally, catalyzes the reversible isomerization of glucose-6-phosphate to fructose-6-phosphate. The polypeptide is Glucose-6-phosphate isomerase (Lactococcus lactis subsp. lactis (strain IL1403) (Streptococcus lactis)).